The following is a 152-amino-acid chain: Protein SprT-like (152 aa).

One can recognise a SprT-like domain in the interval 7–147; the sequence is QRLVEEVSLQ…CGKCKGKLKP (141 aa). Residue histidine 67 participates in Zn(2+) binding. Residue glutamate 68 is part of the active site. Residue histidine 71 participates in Zn(2+) binding.

The protein belongs to the SprT family. Zn(2+) is required as a cofactor.

It is found in the cytoplasm. The protein is Protein SprT-like of Bacillus cereus (strain B4264).